Consider the following 239-residue polypeptide: Derlin-2 (239 aa).

Over 1 to 56 (MAYQSLRLEYLQIPPVSRAYTTACVLTTAAVQLELITPFQLYFNPELIFKHFQIWR) the chain is Cytoplasmic. A helical membrane pass occupies residues 57–77 (LITNFLFFGPVGFNFLFNMIF). Residues 78 to 98 (LYRYCRMLEEGSFRGRTADFV) lie on the Lumenal side of the membrane. Residues 99–119 (FMFLFGGFLMTLFGLFVSLVF) traverse the membrane as a helical segment. Residues 120-150 (LGQAFTIMLVYVWSRRNPYVRMNFFGLLNFQ) are Cytoplasmic-facing. Residues 151-171 (APFLPWVLMGFSLLLGNSIIV) traverse the membrane as a helical segment. Residue Asp172 is a topological domain, lumenal. The chain crosses the membrane as a helical span at residues 173–193 (LLGIAVGHIYFFLEDVFPNQP). Residues 194 to 239 (GGIRILKTPSILKAIFDTPDEDPNYNPLPEERPGGFAWGEGQRLGG) lie on the Cytoplasmic side of the membrane. The interval 215–239 (DPNYNPLPEERPGGFAWGEGQRLGG) is disordered. The span at 229-239 (FAWGEGQRLGG) shows a compositional bias: gly residues.

It belongs to the derlin family. In terms of assembly, forms homo- and heterooligomers with DERL3 and, to a lesser extent, with DERL1. Interacts with the SEL1L/SYVN1 and VCP/SELENOS protein complexes. Mediates association between VCP and EDEM1, as well as that between VCP and the misfolded glycoproteins. Interacts with OS9. Interacts with SELENOK and SELENOS. Interacts with the signal recognition particle/SRP and the SRP receptor; in the process of endoplasmic reticulum stress-induced pre-emptive quality control. Interacts with CCDC47.

It localises to the endoplasmic reticulum membrane. Functionally, functional component of endoplasmic reticulum-associated degradation (ERAD) for misfolded lumenal glycoproteins, but not that of misfolded nonglycoproteins. May act by forming a channel that allows the retrotranslocation of misfolded glycoproteins into the cytosol where they are ubiquitinated and degraded by the proteasome. May mediate the interaction between VCP and misfolded glycoproteins. May also be involved in endoplasmic reticulum stress-induced pre-emptive quality control, a mechanism that selectively attenuates the translocation of newly synthesized proteins into the endoplasmic reticulum and reroutes them to the cytosol for proteasomal degradation. In Pongo abelii (Sumatran orangutan), this protein is Derlin-2.